A 257-amino-acid chain; its full sequence is Phosphatidylglycerol--prolipoprotein diacylglyceryl transferase (257 aa).

A run of 4 helical transmembrane segments spans residues 12-32, 49-69, 83-103, and 109-129; these read FSIRWYAICIVSGMLLAVYLA, FILMAFPLSIVGARIYYVIFE, IWNGGIAIYGGLITGAILLVI, and LINPIDFLDIAAPGVMIAQAI. Arginine 131 contributes to the a 1,2-diacyl-sn-glycero-3-phospho-(1'-sn-glycerol) binding site. 3 consecutive transmembrane segments (helical) span residues 167-187, 197-217, and 226-246; these read VPTFLYESLWNFLGFVIIMSI, GEVACFYLVWYGCGRFIIEGM, and GLRVSQWLSVILVIIGIVMII.

This sequence belongs to the Lgt family.

Its subcellular location is the cell membrane. It catalyses the reaction L-cysteinyl-[prolipoprotein] + a 1,2-diacyl-sn-glycero-3-phospho-(1'-sn-glycerol) = an S-1,2-diacyl-sn-glyceryl-L-cysteinyl-[prolipoprotein] + sn-glycerol 1-phosphate + H(+). It functions in the pathway protein modification; lipoprotein biosynthesis (diacylglyceryl transfer). Its function is as follows. Catalyzes the transfer of the diacylglyceryl group from phosphatidylglycerol to the sulfhydryl group of the N-terminal cysteine of a prolipoprotein, the first step in the formation of mature lipoproteins. This Streptococcus agalactiae serotype Ia (strain ATCC 27591 / A909 / CDC SS700) protein is Phosphatidylglycerol--prolipoprotein diacylglyceryl transferase.